A 137-amino-acid chain; its full sequence is Basic phospholipase A2 homolog 4a (137 aa).

The first 16 residues, 1–16, serve as a signal peptide directing secretion; the sequence is MRTLWIVTVLLVGVEG. Cystine bridges form between cysteine 42/cysteine 131, cysteine 44/cysteine 60, cysteine 59/cysteine 111, cysteine 65/cysteine 137, cysteine 66/cysteine 104, cysteine 73/cysteine 97, and cysteine 91/cysteine 102. Residues 121 to 133 form an important for membrane-damaging activities in eukaryotes and bacteria; heparin-binding region; sequence KKYKIYPKFFCKK.

Belongs to the phospholipase A2 family. Group II subfamily. K49 sub-subfamily. Homodimer; non-covalently linked. In terms of tissue distribution, expressed by the venom gland.

It localises to the secreted. In terms of biological role, snake venom phospholipase A2 homolog that lacks enzymatic activity. Is myotoxic and displays edema-inducing activities. A model of myotoxic mechanism has been proposed: an apo Lys49-PLA2 is activated by the entrance of a hydrophobic molecule (e.g. fatty acid) at the hydrophobic channel of the protein leading to a reorientation of a monomer. This reorientation causes a transition between 'inactive' to 'active' states, causing alignment of C-terminal and membrane-docking sites (MDoS) side-by-side and putting the membrane-disruption sites (MDiS) in the same plane, exposed to solvent and in a symmetric position for both monomers. The MDoS region stabilizes the toxin on membrane by the interaction of charged residues with phospholipid head groups. Subsequently, the MDiS region destabilizes the membrane with penetration of hydrophobic residues. This insertion causes a disorganization of the membrane, allowing an uncontrolled influx of ions (i.e. calcium and sodium), and eventually triggering irreversible intracellular alterations and cell death. The polypeptide is Basic phospholipase A2 homolog 4a (Bothrops asper (Terciopelo)).